We begin with the raw amino-acid sequence, 232 residues long: MKIGIIGAMEEEVTLLRDKIENRQTLTLGGCEIYTGQLNGTDVALLKSGIGKVAAALGATLLLEHCKPDVIINTGSAGGLASTLKVGDIVVSDEARYHDADVTAFGYEYGQLPGCPAGFKADDKLIAAAEYCIRELNLNAVRGLIVSGDAFINGSVGLAKIRHNFPNAVAVEMEATAIAHVCYNFKVPFVVVRAISDVADQQSHLNFDEFLAVAAKQSTLMVETLVQKLAHG.

Glutamate 12 (proton acceptor) is an active-site residue. Substrate contacts are provided by residues glycine 78, isoleucine 152, and 173-174 (ME). Aspartate 197 (proton donor) is an active-site residue.

The protein belongs to the PNP/UDP phosphorylase family. MtnN subfamily. Homodimer.

It catalyses the reaction S-adenosyl-L-homocysteine + H2O = S-(5-deoxy-D-ribos-5-yl)-L-homocysteine + adenine. The enzyme catalyses S-methyl-5'-thioadenosine + H2O = 5-(methylsulfanyl)-D-ribose + adenine. The catalysed reaction is 5'-deoxyadenosine + H2O = 5-deoxy-D-ribose + adenine. Its pathway is amino-acid biosynthesis; L-methionine biosynthesis via salvage pathway; S-methyl-5-thio-alpha-D-ribose 1-phosphate from S-methyl-5'-thioadenosine (hydrolase route): step 1/2. Functionally, catalyzes the irreversible cleavage of the glycosidic bond in both 5'-methylthioadenosine (MTA) and S-adenosylhomocysteine (SAH/AdoHcy) to adenine and the corresponding thioribose, 5'-methylthioribose and S-ribosylhomocysteine, respectively. Also cleaves 5'-deoxyadenosine, a toxic by-product of radical S-adenosylmethionine (SAM) enzymes, into 5-deoxyribose and adenine. Thus, is required for in vivo function of the radical SAM enzymes biotin synthase and lipoic acid synthase, that are inhibited by 5'-deoxyadenosine accumulation. This is 5'-methylthioadenosine/S-adenosylhomocysteine nucleosidase from Salmonella arizonae (strain ATCC BAA-731 / CDC346-86 / RSK2980).